The primary structure comprises 509 residues: Histidine--tRNA ligase (509 aa).

The protein belongs to the class-II aminoacyl-tRNA synthetase family. As to quaternary structure, homodimer.

It localises to the cytoplasm. It catalyses the reaction tRNA(His) + L-histidine + ATP = L-histidyl-tRNA(His) + AMP + diphosphate + H(+). This is Histidine--tRNA ligase from Rhodopseudomonas palustris (strain TIE-1).